The following is a 154-amino-acid chain: MPHPLLPDLETLASATAAGKGYKLCCVQVFTHLIPMTIQVQIRRKDGSDVSLDDCAHFSASMDEALEASQLFTEAYVLEISSPGIGDQLHSDQDFLTFRGFPVEISFRDHDSDLHQAGLLHKRSDEHVHINIKGRIQRIPRKAVTCVRLTNPTG.

It belongs to the RimP family.

The protein localises to the cytoplasm. In terms of biological role, required for maturation of 30S ribosomal subunits. The sequence is that of Ribosome maturation factor RimP from Prochlorococcus marinus (strain MIT 9313).